The sequence spans 717 residues: Polyribonucleotide nucleotidyltransferase (717 aa).

Mg(2+) contacts are provided by Asp495 and Asp501. Positions 562-624 constitute a KH domain; the sequence is PRMIMIQIPK…TALDSALSQI (63 aa). The region spanning 634 to 703 is the S1 motif domain; that stretch reads GEVYEGKVKS…KTGKYRLSRK (70 aa).

Belongs to the polyribonucleotide nucleotidyltransferase family. Requires Mg(2+) as cofactor.

The protein resides in the cytoplasm. It catalyses the reaction RNA(n+1) + phosphate = RNA(n) + a ribonucleoside 5'-diphosphate. Its function is as follows. Involved in mRNA degradation. Catalyzes the phosphorolysis of single-stranded polyribonucleotides processively in the 3'- to 5'-direction. The chain is Polyribonucleotide nucleotidyltransferase from Cytophaga hutchinsonii (strain ATCC 33406 / DSM 1761 / CIP 103989 / NBRC 15051 / NCIMB 9469 / D465).